The sequence spans 217 residues: Large ribosomal subunit protein uL3 (217 aa).

Glutamine 152 carries the N5-methylglutamine modification.

The protein belongs to the universal ribosomal protein uL3 family. Part of the 50S ribosomal subunit. Forms a cluster with proteins L14 and L19. Methylated by PrmB.

In terms of biological role, one of the primary rRNA binding proteins, it binds directly near the 3'-end of the 23S rRNA, where it nucleates assembly of the 50S subunit. The chain is Large ribosomal subunit protein uL3 from Blochmanniella pennsylvanica (strain BPEN).